We begin with the raw amino-acid sequence, 358 residues long: Heme A synthase 1 (358 aa).

Helical transmembrane passes span 11–31 (LVGT…VGGG), 98–117 (WGRL…RLRG), 123–143 (LTAW…MGWY), 159–179 (LYLG…LWTA), and 199–219 (LLSV…LVAA). His-262 lines the heme pocket. The next 3 helical transmembrane spans lie at 264–284 (VAAT…LRAP), 292–312 (LFLL…STLV), and 315–335 (MAEL…ACIA). Heme is bound at residue His-322.

Belongs to the COX15/CtaA family. Type 2 subfamily. In terms of assembly, interacts with CtaB. The cofactor is heme b.

The protein localises to the cell membrane. It catalyses the reaction Fe(II)-heme o + 2 A + H2O = Fe(II)-heme a + 2 AH2. The protein operates within porphyrin-containing compound metabolism; heme A biosynthesis; heme A from heme O: step 1/1. In terms of biological role, catalyzes the conversion of heme O to heme A by two successive hydroxylations of the methyl group at C8. The first hydroxylation forms heme I, the second hydroxylation results in an unstable dihydroxymethyl group, which spontaneously dehydrates, resulting in the formyl group of heme A. In Acidiphilium cryptum (strain JF-5), this protein is Heme A synthase 1.